Here is a 147-residue protein sequence, read N- to C-terminus: D-aminoacyl-tRNA deacylase (147 aa).

The Gly-cisPro motif, important for rejection of L-amino acids motif lies at 136-137 (GP).

Belongs to the DTD family. As to quaternary structure, homodimer.

Its subcellular location is the cytoplasm. The catalysed reaction is glycyl-tRNA(Ala) + H2O = tRNA(Ala) + glycine + H(+). It catalyses the reaction a D-aminoacyl-tRNA + H2O = a tRNA + a D-alpha-amino acid + H(+). In terms of biological role, an aminoacyl-tRNA editing enzyme that deacylates mischarged D-aminoacyl-tRNAs. Also deacylates mischarged glycyl-tRNA(Ala), protecting cells against glycine mischarging by AlaRS. Acts via tRNA-based rather than protein-based catalysis; rejects L-amino acids rather than detecting D-amino acids in the active site. By recycling D-aminoacyl-tRNA to D-amino acids and free tRNA molecules, this enzyme counteracts the toxicity associated with the formation of D-aminoacyl-tRNA entities in vivo and helps enforce protein L-homochirality. The chain is D-aminoacyl-tRNA deacylase from Nitratiruptor sp. (strain SB155-2).